The primary structure comprises 133 residues: DNA-directed RNA polymerase subunit omega (133 aa).

The protein belongs to the RNA polymerase subunit omega family. The RNAP catalytic core consists of 2 alpha, 1 beta, 1 beta' and 1 omega subunit. When a sigma factor is associated with the core the holoenzyme is formed, which can initiate transcription.

It catalyses the reaction RNA(n) + a ribonucleoside 5'-triphosphate = RNA(n+1) + diphosphate. Its function is as follows. Promotes RNA polymerase assembly. Latches the N- and C-terminal regions of the beta' subunit thereby facilitating its interaction with the beta and alpha subunits. The chain is DNA-directed RNA polymerase subunit omega from Brucella canis (strain ATCC 23365 / NCTC 10854 / RM-666).